A 120-amino-acid chain; its full sequence is UPF0102 protein NT01CX_2205 (120 aa).

Belongs to the UPF0102 family.

This is UPF0102 protein NT01CX_2205 from Clostridium novyi (strain NT).